A 1043-amino-acid polypeptide reads, in one-letter code: Sarcoplasmic/endoplasmic reticulum calcium ATPase 2 (1043 aa).

The Cytoplasmic segment spans residues 1 to 48 (MENAHTKTVEEVLGHFGVNESTGLSLEQVKKLKERWGSNELPAEEGKT). Ser-38 is modified (phosphoserine). A helical membrane pass occupies residues 49–69 (LLELVIEQFEDLLVRILLLAA). Over 70–89 (CISFVLAWFEEGEETITAFV) the chain is Lumenal. The chain crosses the membrane as a helical span at residues 90–110 (EPFVILLILVANAIVGVWQER). Topologically, residues 111–253 (NAENAIEALK…QERTPLQQKL (143 aa)) are cytoplasmic. A helical transmembrane segment spans residues 254–273 (DEFGEQLSKVISLICIAVWI). The Lumenal segment spans residues 274–295 (INIGHFNDPVHGGSWIRGAIYY). 3'-nitrotyrosine occurs at positions 294 and 295. The helical transmembrane segment at 296-313 (FKIAVALAVAAIPEGLPA) threads the bilayer. The Ca(2+) site is built by Val-304, Ala-305, Ile-307, and Glu-309. The Cytoplasmic segment spans residues 314–756 (VITTCLALGT…EEGRAIYNNM (443 aa)). Asp-351 acts as the 4-aspartylphosphate intermediate in catalysis. Residues Asp-351 and Thr-353 each contribute to the Mg(2+) site. Thr-353 is an ATP binding site. The residue at position 441 (Thr-441) is a Phosphothreonine. ATP is bound by residues Glu-442, Arg-489, and Lys-514. Residue Ser-531 is modified to Phosphoserine. Arg-559 lines the ATP pocket. Residues 575–594 (MHLEDSANFIKYETNLTFVG) form an interaction with HAX1 region. Ser-580 is modified (phosphoserine). ATP contacts are provided by Thr-624, Gly-625, and Asp-626. Phosphoserine occurs at positions 661 and 663. Residues Arg-677 and Lys-683 each contribute to the ATP site. Position 702 (Asp-702) interacts with Mg(2+). Residue Asn-705 participates in ATP binding. A helical membrane pass occupies residues 757-776 (KQFIRYLISSNVGEVVCIFL). Ca(2+) is bound by residues Asn-767 and Glu-770. Residues 777–786 (TAALGFPEAL) lie on the Lumenal side of the membrane. A helical transmembrane segment spans residues 787 to 807 (IPVQLLWVNLVTDGLPATALG). The interval 787 to 807 (IPVQLLWVNLVTDGLPATALG) is interaction with PLN. Residues 788–1043 (PVQLLWVNLV…DTNFSDMFWS (256 aa)) form an interaction with TMEM64 and PDIA3 region. Ca(2+) is bound by residues Asn-795, Thr-798, and Asp-799. Residues 808-827 (FNPPDLDIMNKPPRNPKEPL) lie on the Cytoplasmic side of the membrane. A helical transmembrane segment spans residues 828-850 (ISGWLFFRYLAIGCYVGAATVGA). Over 851-896 (AAWWFIAADGGPRVSFYQLSHFLQCKEDNPDFEGVDCAIFESPYPM) the chain is Lumenal. Cys-875 and Cys-887 form a disulfide bridge. A helical transmembrane segment spans residues 897–916 (TMALSVLVTIEMCNALNSLS). Glu-907 is a Ca(2+) binding site. Topologically, residues 917–929 (ENQSLLRMPPWEN) are cytoplasmic. The chain crosses the membrane as a helical span at residues 930–948 (IWLVGSICLSMSLHFLILY). An interaction with PLN region spans residues 931 to 942 (WLVGSICLSMSL). The Lumenal portion of the chain corresponds to 949 to 963 (VEPLPLIFQITPLNL). Residues 964-984 (TQWLMVLKISLPVILMDETLK) form a helical membrane-spanning segment. The Cytoplasmic portion of the chain corresponds to 985-1043 (FVARNYLEPGKECAQPATKPSCSLSACTDGISWPFVLLIMPLVVWVYSTDTNFSDMFWS).

This sequence belongs to the cation transport ATPase (P-type) (TC 3.A.3) family. Type IIA subfamily. In terms of assembly, interacts with sarcolipin (SLN); the interaction inhibits ATP2A2 Ca(2+) affinity. Interacts with phospholamban (PLN); the interaction inhibits ATP2A2 Ca(2+) affinity. Interacts with myoregulin (MRLN). Interacts with ARLN and ERLN; the interactions inhibit ATP2A2 Ca(2+) affinity. Interacts with STRIT1/DWORF; the interaction results in activation of ATP2A2. Interacts with the monomeric forms of SLN, PLN, ARLN, ERLN and STRI1/DWORF. Interacts with HAX1. Interacts with S100A8 and S100A9. Interacts with SLC35G1 and STIM1. Interacts with TMEM203. Interacts with TMEM64 and PDIA3. Interacts with TMX1. Interacts with TMX2. Interacts with VMP1; VMP1 competes with PLN and SLN to prevent them from forming an inhibitory complex with ATP2A2. Interacts with ULK1. Interacts with S100A1 in a Ca(2+)-dependent manner. Interacts with TUNAR. Interacts with FLVCR2; this interaction occurs in the absence of heme and promotes ATP2A2 proteasomal degradation; this complex is dissociated upon heme binding. Interacts with FNIP1. As to quaternary structure, interacts with TRAM2 (via C-terminus). It depends on Mg(2+) as a cofactor. In terms of processing, nitrated under oxidative stress. Nitration on the two tyrosine residues inhibits catalytic activity. Serotonylated on Gln residues by TGM2 in response to hypoxia, leading to its inactivation. As to expression, isoform 2 is highly expressed in heart and slow twitch skeletal muscle. Isoform 1 is widely expressed.

Its subcellular location is the endoplasmic reticulum membrane. It localises to the sarcoplasmic reticulum membrane. The catalysed reaction is Ca(2+)(in) + ATP + H2O = Ca(2+)(out) + ADP + phosphate + H(+). Its activity is regulated as follows. Has different conformational states with differential Ca2+ affinity. The E1 conformational state (active form) shows high Ca(2+) affinity, while the E2 state exhibits low Ca(2+) affinity. Binding of ATP allosterically increases its affinity for subsequent binding of Ca2+. Reversibly inhibited by phospholamban (PLN) at low calcium concentrations. PLN inhibits ATP2A2 Ca(2+) affinity by disrupting its allosteric activation by ATP. Inhibited by sarcolipin (SLN) and myoregulin (MRLN). The inhibition is blocked by VMP1. Enhanced by STRIT1/DWORF; STRIT1 increases activity by displacing sarcolipin (SLN), phospholamban (PLN) and myoregulin (MRLN). Stabilizes SERCA2 in its E2 state. This magnesium-dependent enzyme catalyzes the hydrolysis of ATP coupled with the translocation of calcium from the cytosol to the sarcoplasmic reticulum lumen. Involved in autophagy in response to starvation. Upon interaction with VMP1 and activation, controls ER-isolation membrane contacts for autophagosome formation. Also modulates ER contacts with lipid droplets, mitochondria and endosomes. In coordination with FLVCR2 mediates heme-stimulated switching from mitochondrial ATP synthesis to thermogenesis. Functionally, involved in the regulation of the contraction/relaxation cycle. Acts as a regulator of TNFSF11-mediated Ca(2+) signaling pathways via its interaction with TMEM64 which is critical for the TNFSF11-induced CREB1 activation and mitochondrial ROS generation necessary for proper osteoclast generation. Association between TMEM64 and SERCA2 in the ER leads to cytosolic Ca(2+) spiking for activation of NFATC1 and production of mitochondrial ROS, thereby triggering Ca(2+) signaling cascades that promote osteoclast differentiation and activation. The sequence is that of Sarcoplasmic/endoplasmic reticulum calcium ATPase 2 (Atp2a2) from Rattus norvegicus (Rat).